A 906-amino-acid polypeptide reads, in one-letter code: Protein translocase subunit SecA (906 aa).

ATP-binding positions include Gln87, 105–109, and Asp513; that span reads GEGKT. Residues 860-906 form a disordered region; that stretch reads QVNKGEVVSDENTGDDTFVRNEKKVGRNEPCPCGSGKKYKQCHGKLD. The segment covering 876 to 886 has biased composition (basic and acidic residues); that stretch reads TFVRNEKKVGR. Zn(2+) contacts are provided by Cys890, Cys892, Cys901, and His902. Positions 896-906 are enriched in basic residues; it reads KKYKQCHGKLD.

This sequence belongs to the SecA family. As to quaternary structure, monomer and homodimer. Part of the essential Sec protein translocation apparatus which comprises SecA, SecYEG and auxiliary proteins SecDF-YajC and YidC. Zn(2+) serves as cofactor.

It is found in the cell inner membrane. The protein localises to the cytoplasm. It carries out the reaction ATP + H2O + cellular proteinSide 1 = ADP + phosphate + cellular proteinSide 2.. Part of the Sec protein translocase complex. Interacts with the SecYEG preprotein conducting channel. Has a central role in coupling the hydrolysis of ATP to the transfer of proteins into and across the cell membrane, serving both as a receptor for the preprotein-SecB complex and as an ATP-driven molecular motor driving the stepwise translocation of polypeptide chains across the membrane. This is Protein translocase subunit SecA from Psychromonas ingrahamii (strain DSM 17664 / CCUG 51855 / 37).